The chain runs to 446 residues: Enolase (446 aa).

S42 lines the Mg(2+) pocket. A Phosphoserine modification is found at S42. Positions 104–108 (EWGWS) match the Pentapeptide insert motif. An N6-acetyllysine modification is found at K133. K138 participates in a covalent cross-link: Glycyl lysine isopeptide (Lys-Gly) (interchain with G-Cter in ubiquitin). Y139 carries the phosphotyrosine modification. Residues H166 and E175 each contribute to the substrate site. The Proton donor role is filled by E218. D253 contributes to the Mg(2+) binding site. The DKSLVK motif motif lies at 277–282 (DKSLVK). Mg(2+) is bound by residues E304 and D331. Residues E304 and D331 each coordinate substrate. T339 is subject to Phosphothreonine. Catalysis depends on K356, which acts as the Proton acceptor. K375 is subject to N6-acetyllysine. Residues 383–386 (SHRS) and K407 each bind substrate.

Belongs to the enolase family. As to quaternary structure, homodimer. Forms a complex at least composed of DegP, ENO and HSP70. Interacts with G-actin. Interacts (via the DKSLVK motif) with mammalian host PLG/plasminogen (present in the mosquito blood meal); the interaction occurs at the ookinete cell surface and is required for ookinete invasion of the mosquito midgut. Interacts with A.gambiae EBP; depending on the Plasmodium species, the interaction is either involved in ookinete invasion of the mosquito midgut (P.berghei) or is dispensable (P.falciparum). Mg(2+) is required as a cofactor.

The protein localises to the cytoplasm. Its subcellular location is the nucleus. It is found in the cytoskeleton. The protein resides in the cell surface. It localises to the cell membrane. The protein localises to the vacuole. The catalysed reaction is (2R)-2-phosphoglycerate = phosphoenolpyruvate + H2O. The protein operates within carbohydrate degradation; glycolysis; pyruvate from D-glyceraldehyde 3-phosphate: step 4/5. Functionally, glycolytic enzyme that catalyzes the conversion of 2-phosphoglycerate to phosphoenolpyruvate. In addition to glycolysis, involved in various processes such as parasite development and invasion. Plays an essential role during ookinete invasion of the mosquito vector midgut by mediating the interaction of the ookinete with the midgut epithelium and, further, by binding to mammalian host plasminogen in the blood meal, whose conversion to active plasmin promotes the invasion process. This chain is Enolase, found in Plasmodium falciparum (isolate FCR-3 / Gambia).